Consider the following 175-residue polypeptide: COMPASS component SDC1 (175 aa).

Over residues 1–12 the composition is skewed to polar residues; it reads MNESENSPQHNE. The disordered stretch occupies residues 1–45; the sequence is MNESENSPQHNEVTVPMVEDTSSNADIPMEQIQREDNKNYDKHDN. A compositionally biased stretch (basic and acidic residues) spans 32-45; the sequence is IQREDNKNYDKHDN. Residues 121 to 162 are DPY-30; the sequence is QTRKYLNTNVTPHLLAGMRLIAVQQPEDPLRVLGEYLIEQSN.

It belongs to the dpy-30 family. In terms of assembly, component of the Set1C/COMPASS complex which consists of SET1(2), BRE2(2), SPP1(2), SDC1(1), SHG1(1), SWD1(1), SWD2(1), and SWD3(1). Interacts directly with BRE2.

It is found in the nucleus. In terms of biological role, component of the Set1C/COMPASS complex that specifically mono-, di- and trimethylates histone H3 to form H3K4me1/2/3, which subsequently plays a role in telomere length maintenance and transcription elongation regulation. COMPASS recognizes ubiquitinated H2B on one face of the nucleosome which stimulates the methylation of H3 on the opposing face. This chain is COMPASS component SDC1, found in Saccharomyces cerevisiae (strain ATCC 204508 / S288c) (Baker's yeast).